A 504-amino-acid chain; its full sequence is Probable alpha-L-arabinofuranosidase C (504 aa).

Residues Asn-152, Asn-181, Asn-269, and Asn-467 are each glycosylated (N-linked (GlcNAc...) asparagine).

Belongs to the glycosyl hydrolase 51 family.

Its subcellular location is the secreted. The catalysed reaction is Hydrolysis of terminal non-reducing alpha-L-arabinofuranoside residues in alpha-L-arabinosides.. The protein operates within glycan metabolism; L-arabinan degradation. Its function is as follows. Alpha-L-arabinofuranosidase involved in the degradation of arabinoxylan, a major component of plant hemicellulose. Acts only on small linear 1,5-alpha-linked L-arabinofuranosyl oligosaccharides. In Aspergillus terreus (strain NIH 2624 / FGSC A1156), this protein is Probable alpha-L-arabinofuranosidase C (abfC).